The following is a 369-amino-acid chain: Mitogen-activated protein kinase 5 (369 aa).

Residues 36–322 (QPPIMPIGRG…VEEALDHPYL (287 aa)) enclose the Protein kinase domain. Residues 42 to 50 (IGRGAYGIV) and Lys65 contribute to the ATP site. Catalysis depends on Asp162, which acts as the Proton acceptor. The residue at position 194 (Thr194) is a Phosphothreonine. A TXY motif is present at residues 194–196 (TEY). Tyr196 carries the post-translational modification Phosphotyrosine.

The protein belongs to the protein kinase superfamily. CMGC Ser/Thr protein kinase family. MAP kinase subfamily. As to quaternary structure, interacts with MKK1. Dually phosphorylated on Thr-194 and Tyr-196, which activates the enzyme.

It carries out the reaction L-seryl-[protein] + ATP = O-phospho-L-seryl-[protein] + ADP + H(+). The catalysed reaction is L-threonyl-[protein] + ATP = O-phospho-L-threonyl-[protein] + ADP + H(+). Its activity is regulated as follows. Activated by threonine and tyrosine phosphorylation. Its function is as follows. Involved in disease resistance and abiotic stress tolerance signaling pathways. The protein is Mitogen-activated protein kinase 5 (MPK5) of Oryza sativa subsp. indica (Rice).